We begin with the raw amino-acid sequence, 636 residues long: DNA mismatch repair protein MutL (636 aa).

The segment at 362 to 393 is disordered; that stretch reads RKTPEVHEEAEKPEFLVKQEAKNSEEPKNETE. The span at 363–393 shows a compositional bias: basic and acidic residues; it reads KTPEVHEEAEKPEFLVKQEAKNSEEPKNETE.

It belongs to the DNA mismatch repair MutL/HexB family.

Functionally, this protein is involved in the repair of mismatches in DNA. It is required for dam-dependent methyl-directed DNA mismatch repair. May act as a 'molecular matchmaker', a protein that promotes the formation of a stable complex between two or more DNA-binding proteins in an ATP-dependent manner without itself being part of a final effector complex. The chain is DNA mismatch repair protein MutL from Lactobacillus helveticus (strain DPC 4571).